Reading from the N-terminus, the 389-residue chain is Succinate--CoA ligase [ADP-forming] subunit beta (389 aa).

The ATP-grasp domain maps to 9–236 (RDLFEKHGVP…KTTADPLEEK (228 aa)). Residues Lys45, 52-54 (GRG), Ala94, and Glu99 contribute to the ATP site. 2 residues coordinate Mg(2+): Asn191 and Asp205. Substrate contacts are provided by residues Asn256 and 318-320 (GIT).

The protein belongs to the succinate/malate CoA ligase beta subunit family. As to quaternary structure, heterotetramer of two alpha and two beta subunits. Mg(2+) serves as cofactor.

It carries out the reaction succinate + ATP + CoA = succinyl-CoA + ADP + phosphate. It catalyses the reaction GTP + succinate + CoA = succinyl-CoA + GDP + phosphate. The protein operates within carbohydrate metabolism; tricarboxylic acid cycle; succinate from succinyl-CoA (ligase route): step 1/1. In terms of biological role, succinyl-CoA synthetase functions in the citric acid cycle (TCA), coupling the hydrolysis of succinyl-CoA to the synthesis of either ATP or GTP and thus represents the only step of substrate-level phosphorylation in the TCA. The beta subunit provides nucleotide specificity of the enzyme and binds the substrate succinate, while the binding sites for coenzyme A and phosphate are found in the alpha subunit. This chain is Succinate--CoA ligase [ADP-forming] subunit beta, found in Kocuria rhizophila (strain ATCC 9341 / DSM 348 / NBRC 103217 / DC2201).